The following is a 466-amino-acid chain: Ribulose bisphosphate carboxylase large chain (466 aa).

Lys-5 carries the N6,N6,N6-trimethyllysine modification. Substrate is bound by residues Asn-114 and Thr-164. Lys-166 serves as the catalytic Proton acceptor. Residue Lys-168 coordinates substrate. The Mg(2+) site is built by Lys-192, Asp-194, and Glu-195. Lys-192 is modified (N6-carboxylysine). His-285 functions as the Proton acceptor in the catalytic mechanism. Positions 286, 318, and 370 each coordinate substrate.

This sequence belongs to the RuBisCO large chain family. Type I subfamily. In terms of assembly, heterohexadecamer of 8 large chains and 8 small chains; disulfide-linked. The disulfide link is formed within the large subunit homodimers. Mg(2+) serves as cofactor. The disulfide bond which can form in the large chain dimeric partners within the hexadecamer appears to be associated with oxidative stress and protein turnover.

The protein localises to the plastid. Its subcellular location is the chloroplast. It carries out the reaction 2 (2R)-3-phosphoglycerate + 2 H(+) = D-ribulose 1,5-bisphosphate + CO2 + H2O. The catalysed reaction is D-ribulose 1,5-bisphosphate + O2 = 2-phosphoglycolate + (2R)-3-phosphoglycerate + 2 H(+). RuBisCO catalyzes two reactions: the carboxylation of D-ribulose 1,5-bisphosphate, the primary event in carbon dioxide fixation, as well as the oxidative fragmentation of the pentose substrate in the photorespiration process. Both reactions occur simultaneously and in competition at the same active site. The polypeptide is Ribulose bisphosphate carboxylase large chain (Averrhoa carambola (Star fruit)).